The chain runs to 311 residues: Malate dehydrogenase (311 aa).

NAD(+)-binding positions include 7–13 (GAAGGIG) and Asp34. Arg81 and Arg87 together coordinate substrate. Residues Asn94 and 117–119 (ITN) each bind NAD(+). Residues Asn119 and Arg153 each contribute to the substrate site. Residue His177 is the Proton acceptor of the active site. Residue Met227 participates in NAD(+) binding.

This sequence belongs to the LDH/MDH superfamily. MDH type 1 family. Homodimer.

It catalyses the reaction (S)-malate + NAD(+) = oxaloacetate + NADH + H(+). Functionally, catalyzes the reversible oxidation of malate to oxaloacetate. In Shewanella sp. (strain ANA-3), this protein is Malate dehydrogenase.